The sequence spans 64 residues: Tracheal antimicrobial peptide (64 aa).

Residues Met-1–Gly-26 form the signal peptide. Cystine bridges form between Cys-31/Cys-60, Cys-38/Cys-53, and Cys-43/Cys-61.

This sequence belongs to the beta-defensin family. LAP/TAP subfamily. As to expression, tracheal epithelium.

It is found in the secreted. Functionally, has antibacterial activity in vitro against Escherichia coli, Staphylococcus aureus, Klebsiella pneumonia, and Pseudomonas aeruginosa. In addition, the peptide is active against Candida albicans, indicating a broad spectrum of activity. This chain is Tracheal antimicrobial peptide, found in Bos taurus (Bovine).